Consider the following 155-residue polypeptide: Endoribonuclease YbeY (155 aa).

3 residues coordinate Zn(2+): histidine 115, histidine 119, and histidine 125.

The protein belongs to the endoribonuclease YbeY family. The cofactor is Zn(2+).

It localises to the cytoplasm. Single strand-specific metallo-endoribonuclease involved in late-stage 70S ribosome quality control and in maturation of the 3' terminus of the 16S rRNA. The sequence is that of Endoribonuclease YbeY from Polynucleobacter asymbioticus (strain DSM 18221 / CIP 109841 / QLW-P1DMWA-1) (Polynucleobacter necessarius subsp. asymbioticus).